The sequence spans 61 residues: Small ribosomal subunit protein uS14B (61 aa).

Residues C24, C27, C40, and C43 each contribute to the Zn(2+) site.

Belongs to the universal ribosomal protein uS14 family. Zinc-binding uS14 subfamily. As to quaternary structure, part of the 30S ribosomal subunit. Contacts proteins S3 and S10. Zn(2+) serves as cofactor.

In terms of biological role, binds 16S rRNA, required for the assembly of 30S particles and may also be responsible for determining the conformation of the 16S rRNA at the A site. The chain is Small ribosomal subunit protein uS14B from Listeria welshimeri serovar 6b (strain ATCC 35897 / DSM 20650 / CCUG 15529 / CIP 8149 / NCTC 11857 / SLCC 5334 / V8).